A 475-amino-acid polypeptide reads, in one-letter code: Ankyrin repeat, SAM and basic leucine zipper domain-containing protein 1 (475 aa).

Residues 1 to 25 (MAAGPLRGLAVAGGGESSDSEDDGW) form a disordered region. Phosphoserine occurs at positions 17, 18, and 20. ANK repeat units lie at residues 45–74 (ERQE…SVDT), 78–107 (YGWT…NASF), 110–144 (DKQT…DPNV), 148–177 (RLMT…EVNT), 181–210 (NGYT…NKMI), and 214–243 (DGKT…PLEG). The SAM domain maps to 272–334 (SYTAFGDLEI…KIMAALKELE (63 aa)).

Interacts with DDX4, PIWIL1, RANBP9 and TDRD1.

Its subcellular location is the cytoplasm. Its function is as follows. Plays a central role during spermatogenesis by repressing transposable elements and preventing their mobilization, which is essential for the germline integrity. Acts via the piRNA metabolic process, which mediates the repression of transposable elements during meiosis by forming complexes composed of piRNAs and Piwi proteins and governs the methylation and subsequent repression of transposons. Its association with pi-bodies suggests a participation in the primary piRNAs metabolic process. Required prior to the pachytene stage to facilitate the production of multiple types of piRNAs, including those associated with repeats involved in the regulation of retrotransposons. May act by mediating protein-protein interactions during germ cell maturation. This is Ankyrin repeat, SAM and basic leucine zipper domain-containing protein 1 (ASZ1) from Bos taurus (Bovine).